A 617-amino-acid chain; its full sequence is Proline--tRNA ligase (617 aa).

The protein belongs to the class-II aminoacyl-tRNA synthetase family. ProS type 1 subfamily. As to quaternary structure, homodimer.

Its subcellular location is the cytoplasm. The catalysed reaction is tRNA(Pro) + L-proline + ATP = L-prolyl-tRNA(Pro) + AMP + diphosphate. Catalyzes the attachment of proline to tRNA(Pro) in a two-step reaction: proline is first activated by ATP to form Pro-AMP and then transferred to the acceptor end of tRNA(Pro). As ProRS can inadvertently accommodate and process non-cognate amino acids such as alanine and cysteine, to avoid such errors it has two additional distinct editing activities against alanine. One activity is designated as 'pretransfer' editing and involves the tRNA(Pro)-independent hydrolysis of activated Ala-AMP. The other activity is designated 'posttransfer' editing and involves deacylation of mischarged Ala-tRNA(Pro). The misacylated Cys-tRNA(Pro) is not edited by ProRS. The chain is Proline--tRNA ligase from Streptococcus pneumoniae serotype 4 (strain ATCC BAA-334 / TIGR4).